A 319-amino-acid polypeptide reads, in one-letter code: Protoheme IX farnesyltransferase (319 aa).

8 helical membrane passes run 59–79 (IGLI…AGAF), 108–128 (EALV…WFGA), 131–151 (LSAW…TIIL), 158–178 (NIVW…AAVT), 183–203 (WPAI…YWPL), 232–252 (VVLY…AGGA), 254–274 (WVYT…SHAL), and 299–319 (LTLL…VIGG).

The protein belongs to the UbiA prenyltransferase family. Protoheme IX farnesyltransferase subfamily.

The protein resides in the cell membrane. It catalyses the reaction heme b + (2E,6E)-farnesyl diphosphate + H2O = Fe(II)-heme o + diphosphate. It functions in the pathway porphyrin-containing compound metabolism; heme O biosynthesis; heme O from protoheme: step 1/1. In terms of biological role, converts heme B (protoheme IX) to heme O by substitution of the vinyl group on carbon 2 of heme B porphyrin ring with a hydroxyethyl farnesyl side group. This chain is Protoheme IX farnesyltransferase, found in Pseudarthrobacter chlorophenolicus (strain ATCC 700700 / DSM 12829 / CIP 107037 / JCM 12360 / KCTC 9906 / NCIMB 13794 / A6) (Arthrobacter chlorophenolicus).